Consider the following 1175-residue polypeptide: Tyrosine-protein phosphatase non-receptor type 21 (1175 aa).

An FERM domain is found at 23–308; it reads LVARIQLLNN…ARHKFYRLNQ (286 aa). The span at 395-421 shows a compositional bias: polar residues; that stretch reads YSAHSTNSLNTPQPYLQPSPMSSNPSI. Residues 395-445 form a disordered region; that stretch reads YSAHSTNSLNTPQPYLQPSPMSSNPSIPGSDVMRPDYIPSHRHSALIPPSY. Phosphoserine occurs at positions 577, 589, 590, 637, 673, 710, 711, 798, 800, and 805. The segment at 663–702 is disordered; the sequence is DVAPRTFSAGSQSSVFSDKVKQEGTEEQGSGGYSHKKSLS. The Tyrosine-protein phosphatase domain maps to 897–1168; the sequence is VFTEYERILK…TFVYRVLIQF (272 aa). Substrate is bound by residues glutamate 1068, 1109-1115, and glutamine 1153; that span reads CSAGVGR. Cysteine 1109 (phosphocysteine intermediate) is an active-site residue.

It belongs to the protein-tyrosine phosphatase family. Non-receptor class subfamily. Particularly abundantly in adrenal glands.

It is found in the cytoplasm. The protein resides in the cytoskeleton. It catalyses the reaction O-phospho-L-tyrosyl-[protein] + H2O = L-tyrosyl-[protein] + phosphate. In Rattus norvegicus (Rat), this protein is Tyrosine-protein phosphatase non-receptor type 21 (Ptpn21).